We begin with the raw amino-acid sequence, 131 residues long: MARVTVEDCIDKVENRFELVLLASHRARLIASGTPITVERDNDKNPVVALREIADETLTPEDLKEDFIQSLQKHVEVDEPEAEAVPALSSAPDAAQSDAMGDVQFDRMTEEDLLRGLEGLVPPAATDDDGE.

Positions 78–131 (DEPEAEAVPALSSAPDAAQSDAMGDVQFDRMTEEDLLRGLEGLVPPAATDDDGE) are disordered. A compositionally biased stretch (basic and acidic residues) spans 104–115 (QFDRMTEEDLLR).

This sequence belongs to the RNA polymerase subunit omega family. The RNAP catalytic core consists of 2 alpha, 1 beta, 1 beta' and 1 omega subunit. When a sigma factor is associated with the core the holoenzyme is formed, which can initiate transcription.

The enzyme catalyses RNA(n) + a ribonucleoside 5'-triphosphate = RNA(n+1) + diphosphate. Functionally, promotes RNA polymerase assembly. Latches the N- and C-terminal regions of the beta' subunit thereby facilitating its interaction with the beta and alpha subunits. The polypeptide is DNA-directed RNA polymerase subunit omega (Beijerinckia indica subsp. indica (strain ATCC 9039 / DSM 1715 / NCIMB 8712)).